The chain runs to 442 residues: QWRF motif-containing protein 6 (442 aa).

Disordered regions lie at residues 1–144 (MEAK…LSQQ) and 221–240 (FSRL…ADTK). A compositionally biased stretch (basic residues) spans 57–66 (KQHHLQHHQI). A compositionally biased stretch (basic and acidic residues) spans 80–89 (KMADGDENRS). The QWRF motif motif lies at 264-267 (QWRF).

It belongs to the QWRF family.

This chain is QWRF motif-containing protein 6 (QWRF6), found in Arabidopsis thaliana (Mouse-ear cress).